The primary structure comprises 254 residues: Short-chain dehydrogenase srdF (254 aa).

8 residues coordinate NADP(+): I18, S37, E67, N95, Y167, K171, V199, and T201. Y167 acts as the Proton donor in catalysis. The active-site Lowers pKa of active site Tyr is the K171.

It belongs to the short-chain dehydrogenases/reductases (SDR) family.

In terms of biological role, short-chain dehydrogenase; part of the gene cluster that mediates the biosynthesis of sordarial, a salicylic aldehyde structurally related to the phytotoxin pyriculol. The most interesting aspect of this pathway is formation of an aromatic product from the highly reducing polyketide synthase srdA. SrdA synthesizes a reduced polyketide chain from one molecule of acetyl-CoA and five molecules of malonyl-CoA. The polyketide chain is then reductively released as an aldehyde. The oxidoreductases srdC, srdD and srdE then oxidize one of the hydroxy groups to facilitate the intramolecular aldol condensation, followed by dehydration to yield a salicylic aldehyde. This aldehyde can undergo facile reduction by endogenous reductases to yield the alcohol 1-hydroxy-2-hydroxymethyl-3-pent-1,3-dienylbenzene. The flavin-dependent srdI counteract against the propensity of the aldehydes to be reduced under physiological conditions and is responsible for reoxidizing 1-hydroxy-2-hydroxymethyl-3-pent-1,3-dienylbenzene back to the salicylic aldehyde. This salicylic aldehyde is then selectively epoxidized by the cupin-domain-containing oxidoreductase srdB to yield the epoxide, which can be hydrolyzed stereoselectively by the hydrolase srdG to give the final product sordarial. This Neurospora crassa (strain ATCC 24698 / 74-OR23-1A / CBS 708.71 / DSM 1257 / FGSC 987) protein is Short-chain dehydrogenase srdF.